A 160-amino-acid polypeptide reads, in one-letter code: SsrA-binding protein (160 aa).

The protein belongs to the SmpB family.

Its subcellular location is the cytoplasm. Its function is as follows. Required for rescue of stalled ribosomes mediated by trans-translation. Binds to transfer-messenger RNA (tmRNA), required for stable association of tmRNA with ribosomes. tmRNA and SmpB together mimic tRNA shape, replacing the anticodon stem-loop with SmpB. tmRNA is encoded by the ssrA gene; the 2 termini fold to resemble tRNA(Ala) and it encodes a 'tag peptide', a short internal open reading frame. During trans-translation Ala-aminoacylated tmRNA acts like a tRNA, entering the A-site of stalled ribosomes, displacing the stalled mRNA. The ribosome then switches to translate the ORF on the tmRNA; the nascent peptide is terminated with the 'tag peptide' encoded by the tmRNA and targeted for degradation. The ribosome is freed to recommence translation, which seems to be the essential function of trans-translation. The sequence is that of SsrA-binding protein from Marinobacter nauticus (strain ATCC 700491 / DSM 11845 / VT8) (Marinobacter aquaeolei).